The chain runs to 340 residues: Glutaminase 2 (340 aa).

Residues Ser89, Asn140, Asn191, Tyr215, and Tyr267 each contribute to the substrate site.

It belongs to the glutaminase family. In terms of assembly, homotetramer.

It catalyses the reaction L-glutamine + H2O = L-glutamate + NH4(+). The polypeptide is Glutaminase 2 (Yersinia pestis).